Consider the following 706-residue polypeptide: Elongation factor G (706 aa).

The tr-type G domain maps to Ser-8 to Asn-297. GTP-binding positions include Ala-17–Thr-24, Asp-95–His-99, and Asn-149–Asp-152.

This sequence belongs to the TRAFAC class translation factor GTPase superfamily. Classic translation factor GTPase family. EF-G/EF-2 subfamily.

It localises to the cytoplasm. Functionally, catalyzes the GTP-dependent ribosomal translocation step during translation elongation. During this step, the ribosome changes from the pre-translocational (PRE) to the post-translocational (POST) state as the newly formed A-site-bound peptidyl-tRNA and P-site-bound deacylated tRNA move to the P and E sites, respectively. Catalyzes the coordinated movement of the two tRNA molecules, the mRNA and conformational changes in the ribosome. This chain is Elongation factor G, found in Orientia tsutsugamushi (strain Ikeda) (Rickettsia tsutsugamushi).